A 137-amino-acid polypeptide reads, in one-letter code: Ribonuclease VapC3 (137 aa).

Positions Val-12–Ala-129 constitute a PINc domain. Asp-15 and Asp-105 together coordinate Mg(2+).

It belongs to the PINc/VapC protein family. It depends on Mg(2+) as a cofactor.

Functionally, toxic component of a type II toxin-antitoxin (TA) system. An RNase. Its toxic effect is neutralized by coexpression with cognate antitoxin VapB3. This Mycobacterium tuberculosis (strain CDC 1551 / Oshkosh) protein is Ribonuclease VapC3.